Here is a 77-residue protein sequence, read N- to C-terminus: Small ribosomal subunit protein bS18 (77 aa).

Belongs to the bacterial ribosomal protein bS18 family. As to quaternary structure, part of the 30S ribosomal subunit. Forms a tight heterodimer with protein bS6.

In terms of biological role, binds as a heterodimer with protein bS6 to the central domain of the 16S rRNA, where it helps stabilize the platform of the 30S subunit. The polypeptide is Small ribosomal subunit protein bS18 (Lactobacillus gasseri (strain ATCC 33323 / DSM 20243 / BCRC 14619 / CIP 102991 / JCM 1131 / KCTC 3163 / NCIMB 11718 / NCTC 13722 / AM63)).